Reading from the N-terminus, the 152-residue chain is Arginine repressor (152 aa).

The protein belongs to the ArgR family.

Its subcellular location is the cytoplasm. It participates in amino-acid biosynthesis; L-arginine biosynthesis [regulation]. Functionally, regulates arginine biosynthesis genes. This chain is Arginine repressor, found in Lachnoclostridium phytofermentans (strain ATCC 700394 / DSM 18823 / ISDg) (Clostridium phytofermentans).